We begin with the raw amino-acid sequence, 675 residues long: MAEMVAEAAEIPTQSSGAVEISTAVSGELAEMATAVTEMTSGEALASSLFFQHHQFMCSECGSLYNTLEEVLSHQEQHLLTMSEEETLTTQDAGLEPELVPSTGEGPFQCGECSQLILSPSELLAHQDAHLQESASQIQYQCGDCQELFPSPELWVAHRKTQHLSSAADEPPSPLPPPTPPPPPPPPPPPPPPEVKMEPYECPECSTLCATPEEFLEHQGTHFDSLEKEEHNGLEEEEEDEEEGEEEEDDDDEETDEEEASSELTADDTGSNKSTADSAQSCGDCPQHCTSSGARHKHRRASHGPASATHAFHCSQCQRSFSSANRLVAHGRAHVGGTHECTTCSKVFKKAASLEQHQRLHRGEARYLCVDCGRGFGTELTLVAHRRAHTANPLHRCRCGKTFSNMTKFLYHRRTHTGKSGTPTRVATVSPAPAEPTPPPLPPPAQLPCPQCPKSFASASRLSRHRRAVHGPPERRHRCGVCGKGFKKLVHVRNHLRTHTGERPFQCHSCGKTFASLANLSRHQLTHTGVRPYQCLDCGKRFTQSSNLQQHRRLHLRPVAFARAPRLPITGLYNKSPYYCGTCGRWFRAMAGLRLHQRVHARARSLTLQPPRSPSPVPPPPPEPQQTIMCTELGETIAIIETSQPLALEDTLQLCQAALGASEASGLLQLDTAFV.

C2H2-type zinc fingers lie at residues 56-78 (FMCS…QEQH), 108-130 (FQCG…QDAH), and 140-163 (YQCG…KTQH). The disordered stretch occupies residues 160 to 195 (KTQHLSSAADEPPSPLPPPTPPPPPPPPPPPPPPEV). Pro residues predominate over residues 171-194 (PPSPLPPPTPPPPPPPPPPPPPPE). The C2H2-type 4 zinc finger occupies 200 to 222 (YECPECSTLCATPEEFLEHQGTH). A compositionally biased stretch (basic and acidic residues) spans 225-234 (SLEKEEHNGL). The tract at residues 225-283 (SLEKEEHNGLEEEEEDEEEGEEEEDDDDEETDEEEASSELTADDTGSNKSTADSAQSCG) is disordered. Acidic residues predominate over residues 235–261 (EEEEEDEEEGEEEEDDDDEETDEEEAS). Residues 269 to 281 (TGSNKSTADSAQS) show a composition bias toward polar residues. C2H2-type zinc fingers lie at residues 312-334 (FHCS…GRAH), 339-361 (HECT…QRLH), 367-389 (YLCV…RRAH), and 395-416 (HRCR…RRTH). The interval 415-439 (THTGKSGTPTRVATVSPAPAEPTPP) is disordered. A compositionally biased stretch (polar residues) spans 418-427 (GKSGTPTRVA). 5 consecutive C2H2-type zinc fingers follow at residues 447 to 470 (LPCP…RAVH), 477 to 499 (HRCG…LRTH), 505 to 527 (FQCH…QLTH), 533 to 555 (YQCL…RRLH), and 578 to 600 (YYCG…QRVH). Residues 606–625 (LTLQPPRSPSPVPPPPPEPQ) are disordered. Positions 611 to 624 (PRSPSPVPPPPPEP) are enriched in pro residues.

The protein belongs to the krueppel C2H2-type zinc-finger protein family.

It localises to the nucleus. Functionally, may be involved in transcriptional regulation. The protein is Zinc finger protein 526 (Znf526) of Mus musculus (Mouse).